A 195-amino-acid chain; its full sequence is PAP fimbrial minor pilin protein (195 aa).

A signal peptide spans 1-22; sequence MRLRFSVPLFFFGCVFVHGVFA. Cysteine 58 and cysteine 97 are joined by a disulfide.

It belongs to the fimbrial protein family.

Its subcellular location is the secreted. The protein resides in the fimbrium. Its function is as follows. Fimbriae (also called pili), polar filaments radiating from the surface of the bacterium to a length of 0.5-1.5 micrometers and numbering 100-300 per cell, enable bacteria to colonize the epithelium of specific host organs. In terms of biological role, papH seems to anchor the pilus to the bacterial cell. In addition the stoichiometric relationship between PapH and PapA determines the pilus length. The chain is PAP fimbrial minor pilin protein (papH) from Escherichia coli.